The chain runs to 325 residues: NADH-quinone oxidoreductase subunit H (325 aa).

A run of 8 helical transmembrane segments spans residues 11–31, 81–101, 114–134, 154–174, 186–206, 237–257, 265–285, and 304–324; these read ILLTILKAVVILLVVVTCGAF, VIFTLAPMIAFTSLLLAFAIV, IGILFFLMMAGLAVYAVLFAG, LSYEVFLGLSLMGVVAQAGSF, VWNVIPQFFGFITFAIAGVAV, FFVGEYIGIVTISALMVTLFF, LPPFIWFALKTAFFMMMFILI, and ICLPLTLINLLVTAAVILWQA.

This sequence belongs to the complex I subunit 1 family. As to quaternary structure, NDH-1 is composed of 13 different subunits. Subunits NuoA, H, J, K, L, M, N constitute the membrane sector of the complex.

It is found in the cell inner membrane. It carries out the reaction a quinone + NADH + 5 H(+)(in) = a quinol + NAD(+) + 4 H(+)(out). In terms of biological role, NDH-1 shuttles electrons from NADH, via FMN and iron-sulfur (Fe-S) centers, to quinones in the respiratory chain. The immediate electron acceptor for the enzyme in this species is believed to be ubiquinone. Couples the redox reaction to proton translocation (for every two electrons transferred, four hydrogen ions are translocated across the cytoplasmic membrane), and thus conserves the redox energy in a proton gradient. This subunit may bind ubiquinone. The sequence is that of NADH-quinone oxidoreductase subunit H from Escherichia fergusonii (strain ATCC 35469 / DSM 13698 / CCUG 18766 / IAM 14443 / JCM 21226 / LMG 7866 / NBRC 102419 / NCTC 12128 / CDC 0568-73).